Reading from the N-terminus, the 356-residue chain is UDP-N-acetylglucosamine--N-acetylmuramyl-(pentapeptide) pyrophosphoryl-undecaprenol N-acetylglucosamine transferase (356 aa).

UDP-N-acetyl-alpha-D-glucosamine is bound by residues 11-13, asparagine 122, serine 186, and glutamine 287; that span reads TGG.

This sequence belongs to the glycosyltransferase 28 family. MurG subfamily.

Its subcellular location is the cell inner membrane. It catalyses the reaction di-trans,octa-cis-undecaprenyl diphospho-N-acetyl-alpha-D-muramoyl-L-alanyl-D-glutamyl-meso-2,6-diaminopimeloyl-D-alanyl-D-alanine + UDP-N-acetyl-alpha-D-glucosamine = di-trans,octa-cis-undecaprenyl diphospho-[N-acetyl-alpha-D-glucosaminyl-(1-&gt;4)]-N-acetyl-alpha-D-muramoyl-L-alanyl-D-glutamyl-meso-2,6-diaminopimeloyl-D-alanyl-D-alanine + UDP + H(+). It functions in the pathway cell wall biogenesis; peptidoglycan biosynthesis. Cell wall formation. Catalyzes the transfer of a GlcNAc subunit on undecaprenyl-pyrophosphoryl-MurNAc-pentapeptide (lipid intermediate I) to form undecaprenyl-pyrophosphoryl-MurNAc-(pentapeptide)GlcNAc (lipid intermediate II). This chain is UDP-N-acetylglucosamine--N-acetylmuramyl-(pentapeptide) pyrophosphoryl-undecaprenol N-acetylglucosamine transferase, found in Anaplasma marginale (strain St. Maries).